We begin with the raw amino-acid sequence, 127 residues long: Glycine cleavage system H protein (127 aa).

The Lipoyl-binding domain occupies 24-105 (TLTVGVTDHA…AYAAWLFKLK (82 aa)). An N6-lipoyllysine modification is found at Lys65.

It belongs to the GcvH family. As to quaternary structure, the glycine cleavage system is composed of four proteins: P, T, L and H. Requires (R)-lipoate as cofactor.

In terms of biological role, the glycine cleavage system catalyzes the degradation of glycine. The H protein shuttles the methylamine group of glycine from the P protein to the T protein. This Azoarcus sp. (strain BH72) protein is Glycine cleavage system H protein.